Reading from the N-terminus, the 164-residue chain is Protein PPLZ02 (164 aa).

Residues 7-64 (RYRGFRQRHWGSWVSEIRHSILKTRIWQGTFESAEDAARAYDEAARLMCGTRARTNFP) constitute a DNA-binding region (AP2/ERF).

It is found in the nucleus. Essential for all lupin cells independent of the respective tissue. This is Protein PPLZ02 (PPLZ02) from Lupinus polyphyllus (Large-leaved lupine).